The following is a 98-amino-acid chain: NADH-ubiquinone oxidoreductase chain 4L (98 aa).

A run of 3 helical transmembrane segments spans residues proline 2–phenylalanine 22, serine 29–leucine 49, and isoleucine 61–valine 81.

It belongs to the complex I subunit 4L family. Core subunit of respiratory chain NADH dehydrogenase (Complex I) which is composed of 45 different subunits.

The protein resides in the mitochondrion inner membrane. It catalyses the reaction a ubiquinone + NADH + 5 H(+)(in) = a ubiquinol + NAD(+) + 4 H(+)(out). Core subunit of the mitochondrial membrane respiratory chain NADH dehydrogenase (Complex I) which catalyzes electron transfer from NADH through the respiratory chain, using ubiquinone as an electron acceptor. Part of the enzyme membrane arm which is embedded in the lipid bilayer and involved in proton translocation. This Hapalemur aureus (Golden bamboo lemur) protein is NADH-ubiquinone oxidoreductase chain 4L (MT-ND4L).